The following is a 202-amino-acid chain: MGEVVLPGTAIGLKTSEGVVLASEKRLTYDGFVLSRNARKIHMITNHIGVGFAGLMGDVNFLVKVLRLEAKNYELQHGREIKTRSLAKLLSVILYSYKLAPMLTEVVVGGYDEEGPSLYILDPVGSVIEEKYVAVGSGAQLALGYIEPRYNPGLGLKEAEELAVNAVKTVIERDVLSGDGIDLVVIDKNGYQSKEIIFKMTG.

The propeptide at 1-8 is removed in mature form; by autocatalysis; it reads MGEVVLPG. T9 (nucleophile) is an active-site residue.

The protein belongs to the peptidase T1B family. The 20S proteasome core is composed of 14 alpha and 14 beta subunits that assemble into four stacked heptameric rings, resulting in a barrel-shaped structure. The two inner rings, each composed of seven catalytic beta subunits, are sandwiched by two outer rings, each composed of seven alpha subunits. The catalytic chamber with the active sites is on the inside of the barrel. Has a gated structure, the ends of the cylinder being occluded by the N-termini of the alpha-subunits. Is capped at one or both ends by the proteasome regulatory ATPase, PAN.

It localises to the cytoplasm. The enzyme catalyses Cleavage of peptide bonds with very broad specificity.. With respect to regulation, the formation of the proteasomal ATPase PAN-20S proteasome complex, via the docking of the C-termini of PAN into the intersubunit pockets in the alpha-rings, triggers opening of the gate for substrate entry. Interconversion between the open-gate and close-gate conformations leads to a dynamic regulation of the 20S proteasome proteolysis activity. Functionally, component of the proteasome core, a large protease complex with broad specificity involved in protein degradation. The chain is Proteasome subunit beta 1 from Desulfurococcus amylolyticus (strain DSM 18924 / JCM 16383 / VKM B-2413 / 1221n) (Desulfurococcus kamchatkensis).